Here is a 175-residue protein sequence, read N- to C-terminus: NADH-ubiquinone oxidoreductase chain 6 (175 aa).

The next 5 membrane-spanning stretches (helical) occupy residues 1–21 (MMTYIVFILSIIFVVSFVGFS), 25–45 (SPIYGGLVLIISGAVGCGIVL), 47–67 (FGGSFLGLMVFLIYLGGMLVV), 88–108 (AVLGAFVMGLLSELLLACYIL), and 149–169 (YGTWLVIVTGWSLLTGVLVIM).

The protein belongs to the complex I subunit 6 family. As to quaternary structure, core subunit of respiratory chain NADH dehydrogenase (Complex I) which is composed of 45 different subunits.

It is found in the mitochondrion inner membrane. It catalyses the reaction a ubiquinone + NADH + 5 H(+)(in) = a ubiquinol + NAD(+) + 4 H(+)(out). Functionally, core subunit of the mitochondrial membrane respiratory chain NADH dehydrogenase (Complex I) which catalyzes electron transfer from NADH through the respiratory chain, using ubiquinone as an electron acceptor. Essential for the catalytic activity and assembly of complex I. This is NADH-ubiquinone oxidoreductase chain 6 (MT-ND6) from Phoca vitulina (Harbor seal).